The following is a 158-amino-acid chain: MSSAIERKSLDPSEEPVDEVLQIPPSLLTCGGCQQNIGDRYFLKAIDQYWHEDCLSCDLCGCRLGEVGRRLYYKLGRKLCRRDYLRLFGQDGLCASCDKRIRAYEMTMRVKDKVYHLECFKCAACQKHFCVGDRYLLINSDIVCEQDIYEWTKINGII.

LIM zinc-binding domains lie at 30 to 89 (CGGC…RLFG) and 94 to 153 (CASC…EWTK).

Interacts with BEX2 and KDM5A. Interacts via its LIM domains with ELF2 and LDB1. Also interacts with basic helix-loop-helix protein TAL1/SCL and can assemble in a complex with LMO2 and TAL1/SCL. Expressed in early mouse development in central nervous system, lung, kidney, liver and spleen but only very low levels occur in thymus.

The protein resides in the nucleus. Its function is as follows. Acts with TAL1/SCL to regulate red blood cell development. Also acts with LDB1 to maintain erythroid precursors in an immature state. This Mus musculus (Mouse) protein is Rhombotin-2 (Lmo2).